A 367-amino-acid polypeptide reads, in one-letter code: Splicing factor U2AF-associated protein 2 (367 aa).

The interval 36 to 104 (YDPNSLKMNK…SKSENSEASP (69 aa)) is disordered. A compositionally biased stretch (basic and acidic residues) spans 61-78 (TEGKESSNGEDRHTKRLY). 2 RRM domains span residues 112 to 193 (VYIQ…KMRV) and 268 to 329 (LLID…VVEA).

This sequence belongs to the HTATSF1 family. In terms of assembly, interacts with the U2AF large and U2AF small subunits.

Functionally, has a role in pre-mRNA splicing. The protein is Splicing factor U2AF-associated protein 2 (uap2) of Schizosaccharomyces pombe (strain 972 / ATCC 24843) (Fission yeast).